The sequence spans 156 residues: Small ribosomal subunit protein uS7 (156 aa).

This sequence belongs to the universal ribosomal protein uS7 family. In terms of assembly, part of the 30S ribosomal subunit. Contacts proteins S9 and S11.

In terms of biological role, one of the primary rRNA binding proteins, it binds directly to 16S rRNA where it nucleates assembly of the head domain of the 30S subunit. Is located at the subunit interface close to the decoding center, probably blocks exit of the E-site tRNA. The chain is Small ribosomal subunit protein uS7 from Klebsiella pneumoniae (strain 342).